A 334-amino-acid polypeptide reads, in one-letter code: 4-hydroxy-3-methylbut-2-enyl diphosphate reductase (334 aa).

Cysteine 19 contacts [4Fe-4S] cluster. Residues histidine 48 and histidine 84 each contribute to the (2E)-4-hydroxy-3-methylbut-2-enyl diphosphate site. 2 residues coordinate dimethylallyl diphosphate: histidine 48 and histidine 84. Residues histidine 48 and histidine 84 each coordinate isopentenyl diphosphate. Cysteine 106 serves as a coordination point for [4Fe-4S] cluster. Histidine 134 contacts (2E)-4-hydroxy-3-methylbut-2-enyl diphosphate. Dimethylallyl diphosphate is bound at residue histidine 134. Histidine 134 is a binding site for isopentenyl diphosphate. The Proton donor role is filled by glutamate 136. Threonine 175 is a (2E)-4-hydroxy-3-methylbut-2-enyl diphosphate binding site. [4Fe-4S] cluster is bound at residue cysteine 205. Residues serine 233, serine 234, asparagine 235, and serine 278 each contribute to the (2E)-4-hydroxy-3-methylbut-2-enyl diphosphate site. Residues serine 233, serine 234, asparagine 235, and serine 278 each coordinate dimethylallyl diphosphate. 4 residues coordinate isopentenyl diphosphate: serine 233, serine 234, asparagine 235, and serine 278.

The protein belongs to the IspH family. It depends on [4Fe-4S] cluster as a cofactor.

It catalyses the reaction isopentenyl diphosphate + 2 oxidized [2Fe-2S]-[ferredoxin] + H2O = (2E)-4-hydroxy-3-methylbut-2-enyl diphosphate + 2 reduced [2Fe-2S]-[ferredoxin] + 2 H(+). It carries out the reaction dimethylallyl diphosphate + 2 oxidized [2Fe-2S]-[ferredoxin] + H2O = (2E)-4-hydroxy-3-methylbut-2-enyl diphosphate + 2 reduced [2Fe-2S]-[ferredoxin] + 2 H(+). The protein operates within isoprenoid biosynthesis; dimethylallyl diphosphate biosynthesis; dimethylallyl diphosphate from (2E)-4-hydroxy-3-methylbutenyl diphosphate: step 1/1. Its pathway is isoprenoid biosynthesis; isopentenyl diphosphate biosynthesis via DXP pathway; isopentenyl diphosphate from 1-deoxy-D-xylulose 5-phosphate: step 6/6. Catalyzes the conversion of 1-hydroxy-2-methyl-2-(E)-butenyl 4-diphosphate (HMBPP) into a mixture of isopentenyl diphosphate (IPP) and dimethylallyl diphosphate (DMAPP). Acts in the terminal step of the DOXP/MEP pathway for isoprenoid precursor biosynthesis. In Chelativorans sp. (strain BNC1), this protein is 4-hydroxy-3-methylbut-2-enyl diphosphate reductase.